We begin with the raw amino-acid sequence, 105 residues long: Mini zinc finger protein 1 (105 aa).

Residues 1 to 29 (MGPQQDRSAAKPYANGSTAAAAAAGRKEN) are disordered. The segment at 35–84 (YRECQRNHAASIGGHAVDGCREFMASGAEGTAAALLCAACGCHRSFHRRE) adopts a ZF-HD dimerization-type; degenerate zinc-finger fold.

Homo- and heterodimers.

The protein resides in the cytoplasm. Its function is as follows. Inhibits zinc finger homeodomain (ZHD) transcription factors, by interacting with them to prevent both their nuclear localization and their DNA-binding properties. The sequence is that of Mini zinc finger protein 1 (MIF1) from Oryza sativa subsp. indica (Rice).